Consider the following 233-residue polypeptide: MAAPTGKLLVHRIRAGLTCLTQVRWSRYSPQYLDPETDKQVYSRPLEELSEQERTERELKIVRPIKAAPSNVTSSVFSDPTISKFTNMMMKGGNKNLSRSIMNQTLEQIKRTQLEKYYKAPEEERASIECNPYTIFHQALHNCQPIIGLTSILRGGKSYQVPTPLKENRRRFLAMKWLITECRDNKHRRTLMYEKLSQALLDAYQMQGEVVKKKHELHKMAEANRAFAHFRWW.

Residues methionine 1 to tyrosine 28 constitute a mitochondrion transit peptide.

This sequence belongs to the universal ribosomal protein uS7 family. In terms of assembly, component of the mitochondrial ribosome small subunit (28S) which comprises a 12S rRNA and about 30 distinct proteins.

Its subcellular location is the mitochondrion. The protein is Small ribosomal subunit protein uS7m (mrps7) of Xenopus laevis (African clawed frog).